The primary structure comprises 122 residues: Large ribosomal subunit protein uL14 (122 aa).

Belongs to the universal ribosomal protein uL14 family. As to quaternary structure, part of the 50S ribosomal subunit. Forms a cluster with proteins L3 and L19. In the 70S ribosome, L14 and L19 interact and together make contacts with the 16S rRNA in bridges B5 and B8.

In terms of biological role, binds to 23S rRNA. Forms part of two intersubunit bridges in the 70S ribosome. The sequence is that of Large ribosomal subunit protein uL14 from Gluconobacter oxydans (strain 621H) (Gluconobacter suboxydans).